The sequence spans 278 residues: Probable endonuclease 4 (278 aa).

Histidine 67, histidine 107, glutamate 141, aspartate 173, histidine 176, histidine 210, aspartate 223, histidine 225, and glutamate 255 together coordinate Zn(2+).

It belongs to the AP endonuclease 2 family. Requires Zn(2+) as cofactor.

The catalysed reaction is Endonucleolytic cleavage to 5'-phosphooligonucleotide end-products.. Its function is as follows. Endonuclease IV plays a role in DNA repair. It cleaves phosphodiester bonds at apurinic or apyrimidinic (AP) sites, generating a 3'-hydroxyl group and a 5'-terminal sugar phosphate. This Natronomonas pharaonis (strain ATCC 35678 / DSM 2160 / CIP 103997 / JCM 8858 / NBRC 14720 / NCIMB 2260 / Gabara) (Halobacterium pharaonis) protein is Probable endonuclease 4.